A 351-amino-acid chain; its full sequence is N-acetyl-gamma-glutamyl-phosphate reductase (351 aa).

The active site involves Cys-154.

This sequence belongs to the NAGSA dehydrogenase family. Type 1 subfamily.

Its subcellular location is the cytoplasm. The enzyme catalyses N-acetyl-L-glutamate 5-semialdehyde + phosphate + NADP(+) = N-acetyl-L-glutamyl 5-phosphate + NADPH + H(+). It functions in the pathway amino-acid biosynthesis; L-arginine biosynthesis; N(2)-acetyl-L-ornithine from L-glutamate: step 3/4. Its function is as follows. Catalyzes the NADPH-dependent reduction of N-acetyl-5-glutamyl phosphate to yield N-acetyl-L-glutamate 5-semialdehyde. This chain is N-acetyl-gamma-glutamyl-phosphate reductase, found in Prochlorococcus marinus subsp. pastoris (strain CCMP1986 / NIES-2087 / MED4).